We begin with the raw amino-acid sequence, 271 residues long: Pyrroline-5-carboxylate reductase (271 aa).

Belongs to the pyrroline-5-carboxylate reductase family.

Its subcellular location is the cytoplasm. The catalysed reaction is L-proline + NADP(+) = (S)-1-pyrroline-5-carboxylate + NADPH + 2 H(+). The enzyme catalyses L-proline + NAD(+) = (S)-1-pyrroline-5-carboxylate + NADH + 2 H(+). Its pathway is amino-acid biosynthesis; L-proline biosynthesis; L-proline from L-glutamate 5-semialdehyde: step 1/1. Catalyzes the reduction of 1-pyrroline-5-carboxylate (PCA) to L-proline. This is Pyrroline-5-carboxylate reductase from Staphylococcus epidermidis (strain ATCC 35984 / DSM 28319 / BCRC 17069 / CCUG 31568 / BM 3577 / RP62A).